A 242-amino-acid polypeptide reads, in one-letter code: Cytochrome c oxidase subunit 2 (242 aa).

Topologically, residues 1–30 (MSFYGSRYFGDIVHGELGKDLFRYHGFVMM) are mitochondrial intermembrane. A helical membrane pass occupies residues 31–47 (VAVAVLVFVMYMGCVIL). Residues 48–66 (FTKFSYRHFLNRQRLEFWW) are Mitochondrial matrix-facing. Residues 67–83 (TIVPMLMLVGLWXPSMI) traverse the membrane as a helical segment. Topologically, residues 84 to 242 (NLYYMEEVKR…YFVMWLEALN (159 aa)) are mitochondrial intermembrane. The Cu cation site is built by H176, C211, E213, C215, H219, and M222. E213 serves as a coordination point for Mg(2+).

Belongs to the cytochrome c oxidase subunit 2 family. As to quaternary structure, component of the cytochrome c oxidase (complex IV, CIV), a multisubunit enzyme composed of a catalytic core of 3 subunits and several supernumerary subunits. The complex exists as a monomer or a dimer and forms supercomplexes (SCs) in the inner mitochondrial membrane with ubiquinol-cytochrome c oxidoreductase (cytochrome b-c1 complex, complex III, CIII). The cofactor is Cu cation.

The protein localises to the mitochondrion inner membrane. It carries out the reaction 4 Fe(II)-[cytochrome c] + O2 + 8 H(+)(in) = 4 Fe(III)-[cytochrome c] + 2 H2O + 4 H(+)(out). Its function is as follows. Component of the cytochrome c oxidase, the last enzyme in the mitochondrial electron transport chain which drives oxidative phosphorylation. The respiratory chain contains 3 multisubunit complexes succinate dehydrogenase (complex II, CII), ubiquinol-cytochrome c oxidoreductase (cytochrome b-c1 complex, complex III, CIII) and cytochrome c oxidase (complex IV, CIV), that cooperate to transfer electrons derived from NADH and succinate to molecular oxygen, creating an electrochemical gradient over the inner membrane that drives transmembrane transport and the ATP synthase. Cytochrome c oxidase is the component of the respiratory chain that catalyzes the reduction of oxygen to water. Electrons originating from reduced cytochrome c in the intermembrane space (IMS) are transferred via the dinuclear copper A center (CU(A)) of subunit 2 and heme A of subunit 1 to the active site in subunit 1, a binuclear center (BNC) formed by heme A3 and copper B (CU(B)). The BNC reduces molecular oxygen to 2 water molecules using 4 electrons from cytochrome c in the IMS and 4 protons from the mitochondrial matrix. This chain is Cytochrome c oxidase subunit 2 (COII), found in Mytilus edulis (Blue mussel).